A 58-amino-acid chain; its full sequence is Large ribosomal subunit protein uL30 (58 aa).

The protein belongs to the universal ribosomal protein uL30 family. As to quaternary structure, part of the 50S ribosomal subunit.

The sequence is that of Large ribosomal subunit protein uL30 from Azotobacter vinelandii (strain DJ / ATCC BAA-1303).